Reading from the N-terminus, the 474-residue chain is Synaptotagmin-15B (474 aa).

2 disordered regions span residues 1 to 62 and 75 to 128; these read MGVV…AASG and PRAA…PPAV. Positions 75 to 88 are enriched in low complexity; that stretch reads PRAAAGHQQHHGPP. C2 domains lie at 200–317 and 331–452; these read CLGR…RRVI and EFGD…EHWD.

It belongs to the synaptotagmin family.

The sequence is that of Synaptotagmin-15B from Homo sapiens (Human).